We begin with the raw amino-acid sequence, 345 residues long: 3-isopropylmalate dehydrogenase (345 aa).

Residue 76–87 participates in NAD(+) binding; it reads GPKYDNAPVRPE. Positions 94, 104, 132, and 216 each coordinate substrate. Positions 216, 240, and 244 each coordinate Mg(2+). Position 274–286 (274–286) interacts with NAD(+); that stretch reads GSAPDIAGQGIAN.

The protein belongs to the isocitrate and isopropylmalate dehydrogenases family. LeuB type 1 subfamily. Homodimer. Mg(2+) serves as cofactor. Requires Mn(2+) as cofactor.

The protein resides in the cytoplasm. It catalyses the reaction (2R,3S)-3-isopropylmalate + NAD(+) = 4-methyl-2-oxopentanoate + CO2 + NADH. Its pathway is amino-acid biosynthesis; L-leucine biosynthesis; L-leucine from 3-methyl-2-oxobutanoate: step 3/4. Its function is as follows. Catalyzes the oxidation of 3-carboxy-2-hydroxy-4-methylpentanoate (3-isopropylmalate) to 3-carboxy-4-methyl-2-oxopentanoate. The product decarboxylates to 4-methyl-2 oxopentanoate. This chain is 3-isopropylmalate dehydrogenase, found in Streptococcus thermophilus (strain CNRZ 1066).